We begin with the raw amino-acid sequence, 440 residues long: Ribulose bisphosphate carboxylase large chain (440 aa).

At Lys4 the chain carries N6,N6,N6-trimethyllysine. 2 residues coordinate substrate: Asn113 and Thr163. Residue Lys165 is the Proton acceptor of the active site. Lys167 is a substrate binding site. Residues Lys191, Asp193, and Glu194 each coordinate Mg(2+). Lys191 carries the N6-carboxylysine modification. His284 functions as the Proton acceptor in the catalytic mechanism. The substrate site is built by Arg285, His317, and Ser369.

Belongs to the RuBisCO large chain family. Type I subfamily. Heterohexadecamer of 8 large chains and 8 small chains; disulfide-linked. The disulfide link is formed within the large subunit homodimers. The cofactor is Mg(2+). In terms of processing, the disulfide bond which can form in the large chain dimeric partners within the hexadecamer appears to be associated with oxidative stress and protein turnover.

It localises to the plastid. It is found in the chloroplast. The enzyme catalyses 2 (2R)-3-phosphoglycerate + 2 H(+) = D-ribulose 1,5-bisphosphate + CO2 + H2O. The catalysed reaction is D-ribulose 1,5-bisphosphate + O2 = 2-phosphoglycolate + (2R)-3-phosphoglycerate + 2 H(+). Its function is as follows. RuBisCO catalyzes two reactions: the carboxylation of D-ribulose 1,5-bisphosphate, the primary event in carbon dioxide fixation, as well as the oxidative fragmentation of the pentose substrate in the photorespiration process. Both reactions occur simultaneously and in competition at the same active site. In Onoclea sensibilis (Sensitive fern), this protein is Ribulose bisphosphate carboxylase large chain.